Reading from the N-terminus, the 103-residue chain is Large ribosomal subunit protein eL30 (103 aa).

It belongs to the eukaryotic ribosomal protein eL30 family.

This Methanosarcina mazei (strain ATCC BAA-159 / DSM 3647 / Goe1 / Go1 / JCM 11833 / OCM 88) (Methanosarcina frisia) protein is Large ribosomal subunit protein eL30.